The following is a 229-amino-acid chain: ATP-dependent Clp protease proteolytic subunit (229 aa).

The Nucleophile role is filled by Ser-101. Residue His-126 is part of the active site.

It belongs to the peptidase S14 family. Component of the chloroplastic Clp protease core complex.

The protein localises to the plastid. Its subcellular location is the chloroplast stroma. It catalyses the reaction Hydrolysis of proteins to small peptides in the presence of ATP and magnesium. alpha-casein is the usual test substrate. In the absence of ATP, only oligopeptides shorter than five residues are hydrolyzed (such as succinyl-Leu-Tyr-|-NHMec, and Leu-Tyr-Leu-|-Tyr-Trp, in which cleavage of the -Tyr-|-Leu- and -Tyr-|-Trp bonds also occurs).. Cleaves peptides in various proteins in a process that requires ATP hydrolysis. Has a chymotrypsin-like activity. Plays a major role in the degradation of misfolded proteins. This Mesostigma viride (Green alga) protein is ATP-dependent Clp protease proteolytic subunit.